A 432-amino-acid polypeptide reads, in one-letter code: Eukaryotic translation initiation factor 3 subunit E (432 aa).

A PCI domain is found at 221 to 401 (VYYNYPKGRD…MGVKSVSIHE (181 aa)).

It belongs to the eIF-3 subunit E family. In terms of assembly, component of the eukaryotic translation initiation factor 3 (eIF-3) complex.

The protein resides in the cytoplasm. In terms of biological role, component of the eukaryotic translation initiation factor 3 (eIF-3) complex, which is involved in protein synthesis of a specialized repertoire of mRNAs and, together with other initiation factors, stimulates binding of mRNA and methionyl-tRNAi to the 40S ribosome. The eIF-3 complex specifically targets and initiates translation of a subset of mRNAs involved in cell proliferation. This Caenorhabditis elegans protein is Eukaryotic translation initiation factor 3 subunit E.